A 308-amino-acid chain; its full sequence is S-adenosylmethionine-dependent nucleotide dehydratase (308 aa).

In terms of domain architecture, Radical SAM core spans 7-253; that stretch reads SIQELVINFH…WQSYLMINPE (247 aa). [4Fe-4S] cluster is bound by residues Cys21, Cys25, and Cys28.

The protein belongs to the radical SAM superfamily. Viperin family. The cofactor is [4Fe-4S] cluster.

It catalyses the reaction CTP + AH2 + S-adenosyl-L-methionine = 3'-deoxy-3',4'-didehydro-CTP + 5'-deoxyadenosine + L-methionine + A + H2O + H(+). The enzyme catalyses GTP + AH2 + S-adenosyl-L-methionine = 3'-deoxy-3',4'-didehydro-GTP + 5'-deoxyadenosine + L-methionine + A + H2O + H(+). It carries out the reaction UTP + AH2 + S-adenosyl-L-methionine = 3'-deoxy-3',4'-didehydro-UTP + 5'-deoxyadenosine + L-methionine + A + H2O + H(+). Functionally, expression of pVip58 in E.coli (strain MG1655) confers resistance to phages lambda, P1 and T7; delays culture collapse upon infection with T7. Catalyzes the conversion of cytidine triphosphate (CTP) to 3'-deoxy-3',4'-didehydro-CTP (ddhCTP), guanosine triphosphate (GTP) to 3'-deoxy-3',4'-didehydro-GTP (ddhGTP) and uridine triphosphate (UTP) to 3'-deoxy-3',4'-didehydro-UTP (ddhUTP), probably via a SAM-dependent radical mechanism. The modified nucleotide represses transcription from T7 RNA polymerase-directed genes (possibly by acting as chain terminators), strongly suggesting these nucleotides block viral polymerase transcription. The protein is S-adenosylmethionine-dependent nucleotide dehydratase of Pseudoalteromonas ulvae.